The sequence spans 530 residues: Ubiquitin carboxyl-terminal hydrolase 17-like protein 20 (530 aa).

Residues 80–375 (AGLQNMGNTC…QAYVLFYIQK (296 aa)) enclose the USP domain. The active-site Nucleophile is the Cys-89. Catalysis depends on His-334, which acts as the Proton acceptor. Composition is skewed to basic and acidic residues over residues 382-392 (SESVSRGREPR) and 398-413 (DTDR…RDHP). Disordered regions lie at residues 382-413 (SESV…RDHP) and 509-530 (RGRA…LVCQ). The span at 510–524 (GRARRSKGKNKHSKR) shows a compositional bias: basic residues.

It belongs to the peptidase C19 family. USP17 subfamily.

Its subcellular location is the nucleus. It localises to the endoplasmic reticulum. The catalysed reaction is Thiol-dependent hydrolysis of ester, thioester, amide, peptide and isopeptide bonds formed by the C-terminal Gly of ubiquitin (a 76-residue protein attached to proteins as an intracellular targeting signal).. In terms of biological role, deubiquitinating enzyme that removes conjugated ubiquitin from specific proteins to regulate different cellular processes that may include cell proliferation, progression through the cell cycle, apoptosis, cell migration, and the cellular response to viral infection. This chain is Ubiquitin carboxyl-terminal hydrolase 17-like protein 20 (USP17L20), found in Homo sapiens (Human).